The sequence spans 428 residues: Maltoporin (428 aa).

Residues M1–A21 form the signal peptide.

Belongs to the porin LamB (TC 1.B.3) family. In terms of assembly, homotrimer formed of three 18-stranded antiparallel beta-barrels, containing three independent channels.

It is found in the cell outer membrane. It catalyses the reaction beta-maltose(in) = beta-maltose(out). Functionally, involved in the transport of maltose and maltodextrins. This is Maltoporin from Mannheimia succiniciproducens (strain KCTC 0769BP / MBEL55E).